The chain runs to 554 residues: L-ascorbate oxidase homolog (554 aa).

A signal peptide spans 1–21; that stretch reads MGSGKVTFVALLLCLSVGVIA. 2 Plastocyanin-like domains span residues 22 to 143 and 196 to 296; these read EDPY…LNVH and SAKV…AIIR. N-linked (GlcNAc...) asparagine glycans are attached at residues Asn31, Asn59, and Asn108. A disulfide bridge connects residues Cys101 and Cys540. N-linked (GlcNAc...) asparagine glycosylation is found at Asn332, Asn352, and Asn423. One can recognise a Plastocyanin-like 3 domain in the interval 411–521; that stretch reads DPSKLTIATN…LGEQLYFSVL (111 aa).

The protein belongs to the multicopper oxidase family. As to expression, pollen.

The protein resides in the secreted. It localises to the extracellular space. Functionally, probable oxidoreductase that may be involved in pollen tube growth. This chain is L-ascorbate oxidase homolog, found in Nicotiana tabacum (Common tobacco).